A 163-amino-acid polypeptide reads, in one-letter code: Adenosine 5'-monophosphoramidase HINT2 (163 aa).

A mitochondrion-targeting transit peptide spans methionine 1 to alanine 17. The HIT domain maps to isoleucine 55–glycine 163. Residues serine 63 and aspartate 80 each coordinate AMP. Lysine 119 carries the N6-acetyllysine modification. Residue asparagine 136 coordinates AMP. Lysine 139 bears the N6-acetyllysine mark. AMP is bound by residues alanine 142–valine 145 and histidine 149–histidine 151. The Histidine triad motif signature appears at histidine 147 to histidine 151. The active-site Tele-AMP-histidine intermediate is the histidine 149.

It belongs to the HINT family.

It localises to the mitochondrion. The catalysed reaction is adenosine 5'-phosphoramidate + H2O = AMP + NH4(+). Exhibits adenosine 5'-monophosphoramidase activity, hydrolyzing purine nucleotide phosphoramidates with a single phosphate group such as adenosine 5'monophosphoramidate (AMP-NH2) to yield AMP and NH2. Hydrolyzes adenosine 5'-O-p-nitrophenylphosphoramidate (AMP-pNA). May be involved in steroid biosynthesis. May play a role in apoptosis. The sequence is that of Adenosine 5'-monophosphoramidase HINT2 from Bos taurus (Bovine).